A 1147-amino-acid chain; its full sequence is Protein lin-41 (1147 aa).

Residues 1-93 (MATIVPCSLE…PPSMIQSPQQ (93 aa)) are disordered. Residues 33–47 (SGNELSMGGSSSEGD) show a composition bias toward low complexity. A compositionally biased stretch (basic and acidic residues) spans 48–65 (SMSHHRGEHSPNHHHQDN). A compositionally biased stretch (low complexity) spans 84–93 (PPSMIQSPQQ). An RING-type zinc finger spans residues 114-155 (CSVCSKSSTIGVLPFVCAHKTCQSCYQMTPSSYDRRACKLCG). The B box-type; atypical zinc finger occupies 366 to 412 (MGPIQCQGCESKISFAYCMQCQEALCIHCVQAHQRVRATKQHAFVEL). The Zn(2+) site is built by C371, C374, C394, and H398. Residues 565–618 (AFDTHVNALEERRKELLKRVETVKNLKLSVLISQAESLQSKQIDLQQAIQTATK) adopt a coiled-coil conformation. Residues 723-817 (ACGDLLSSSI…ISGCPTTMDI (95 aa)) form a Filamin repeat. NHL repeat units lie at residues 832 to 875 (ILTF…FDKD), 879 to 922 (ISKF…FDEN), 926 to 969 (LLKF…FTPQ), 974 to 1017 (RKCG…LSPR), 1022 to 1065 (MKVY…FASD), and 1107 to 1147 (SAPT…IRVF). Residues 1104-1123 (AFSSAPTPLTPSPRQLLDRP) are disordered.

Belongs to the TRIM/RBCC family.

The protein resides in the cytoplasm. It localises to the P-body. In terms of biological role, heterochronic protein which acts downstream of let-7 in temporal patterning. Plays a role in the developmental timing of postembryonic hypodermal seam cell division and fusion events and adult alae production. Represses lin-29 during late larval stages, which prevents terminal differentiation of hypodermal seam cells and promotes their division. Involved in post-transcriptional gene regulation, uses two independent pathways. Has direct and specific RNA-binding activity and, depending on the location (5'UTR or 3'UTR) of the target site, triggers either mRNA decay or repression of translation. Degrades the mRNA of transcription factor dmd-3 to govern the timing and extent of male tail tip morphogenesis. Plays a role in the sexual maturation of the nervous system. This chain is Protein lin-41, found in Caenorhabditis elegans.